Reading from the N-terminus, the 214-residue chain is Large ribosomal subunit protein uL16 (214 aa).

A Citrulline modification is found at arginine 32. A Glycyl lysine isopeptide (Lys-Gly) (interchain with G-Cter in SUMO2) cross-link involves residue lysine 175. Lysine 188 participates in a covalent cross-link: Glycyl lysine isopeptide (Lys-Gly) (interchain with G-Cter in ubiquitin).

Belongs to the universal ribosomal protein uL16 family. As to quaternary structure, component of the large ribosomal subunit. Mature ribosomes consist of a small (40S) and a large (60S) subunit. The 40S subunit contains about 33 different proteins and 1 molecule of RNA (18S). The 60S subunit contains about 49 different proteins and 3 molecules of RNA (28S, 5.8S and 5S). Citrullinated by PADI4. Post-translationally, ufmylated by UFL1.

The protein resides in the cytoplasm. Its function is as follows. Component of the large ribosomal subunit. Plays a role in the formation of actively translating ribosomes. May play a role in the embryonic brain development. The sequence is that of Large ribosomal subunit protein uL16 from Rattus norvegicus (Rat).